Consider the following 505-residue polypeptide: Lysine--tRNA ligase, heat inducible (505 aa).

N6-acetyllysine occurs at positions 114 and 156. Residues E415 and E422 each contribute to the Mg(2+) site.

Belongs to the class-II aminoacyl-tRNA synthetase family. Homodimer. Mg(2+) serves as cofactor.

The protein localises to the cytoplasm. The catalysed reaction is tRNA(Lys) + L-lysine + ATP = L-lysyl-tRNA(Lys) + AMP + diphosphate. This chain is Lysine--tRNA ligase, heat inducible (lysU), found in Escherichia coli O6:H1 (strain CFT073 / ATCC 700928 / UPEC).